The sequence spans 203 residues: Holliday junction branch migration complex subunit RuvA (203 aa).

Positions 1 to 63 (MIGKLSGKID…EEHIHLYGFL (63 aa)) are domain I. The domain II stretch occupies residues 64–142 (TIEEKNFFNL…KISTGAAIIN (79 aa)). The tract at residues 143–149 (DSLNIKN) is flexible linker. The domain III stretch occupies residues 150 to 203 (ITSVASNEVIKALVNLGFSRFEAQNSVQGIVIQNPEISIDELIKTALKNRNAGL).

This sequence belongs to the RuvA family. In terms of assembly, homotetramer. Forms an RuvA(8)-RuvB(12)-Holliday junction (HJ) complex. HJ DNA is sandwiched between 2 RuvA tetramers; dsDNA enters through RuvA and exits via RuvB. An RuvB hexamer assembles on each DNA strand where it exits the tetramer. Each RuvB hexamer is contacted by two RuvA subunits (via domain III) on 2 adjacent RuvB subunits; this complex drives branch migration. In the full resolvosome a probable DNA-RuvA(4)-RuvB(12)-RuvC(2) complex forms which resolves the HJ.

The protein localises to the cytoplasm. Functionally, the RuvA-RuvB-RuvC complex processes Holliday junction (HJ) DNA during genetic recombination and DNA repair, while the RuvA-RuvB complex plays an important role in the rescue of blocked DNA replication forks via replication fork reversal (RFR). RuvA specifically binds to HJ cruciform DNA, conferring on it an open structure. The RuvB hexamer acts as an ATP-dependent pump, pulling dsDNA into and through the RuvAB complex. HJ branch migration allows RuvC to scan DNA until it finds its consensus sequence, where it cleaves and resolves the cruciform DNA. The polypeptide is Holliday junction branch migration complex subunit RuvA (Rickettsia akari (strain Hartford)).